Reading from the N-terminus, the 358-residue chain is Reverse gyrase subunit A (358 aa).

In terms of domain architecture, Topo IA-type catalytic spans 1–351 (MNATLRIRNR…KLYLELERVV (351 aa)). Tyr78 acts as the O-(5'-phospho-DNA)-tyrosine intermediate in catalysis.

Belongs to the type IA topoisomerase family. Heterodimer of an RgyrA and RgyrB subunit. The topoisomerase domain is shared between the two subunits. It depends on Mg(2+) as a cofactor.

The protein resides in the cytoplasm. In terms of biological role, modifies the topological state of DNA by introducing positive supercoils in an ATP-dependent process; dATP also allows positive supercoiling. Increases the linking number in steps of +1. Only this subunit binds DNA, in isolation it does not hydrolyze ATP. Hydrolyzes ATP only in the presence of DNA. Transiently cleaves a single DNA strand and remains covalently bound to the 5' DNA end probably through a tyrosine residue. It changes linking number in steps of one, and nicks DNA preferentially at 5'-CNNN | 3'-sites with a strong preference for 4 pyrimidine residues. There are about 1000 heterodimers per cell. May be involved in rewinding the DNA strands in the regions of the chromosome that have opened up to allow transcription or replication. Reverse gyrase activity is reconstituted after incubation at 80 degrees Celsius for 5 minutes, positive supercoiling requires ATP and Mg(2+). In the presence of ATP it binds and nicks substrate but does not make closed product. In Methanopyrus kandleri (strain AV19 / DSM 6324 / JCM 9639 / NBRC 100938), this protein is Reverse gyrase subunit A.